Here is a 256-residue protein sequence, read N- to C-terminus: Imidazole glycerol phosphate synthase subunit HisF (256 aa).

Residues aspartate 13 and aspartate 132 contribute to the active site.

The protein belongs to the HisA/HisF family. In terms of assembly, heterodimer of HisH and HisF.

It is found in the cytoplasm. It catalyses the reaction 5-[(5-phospho-1-deoxy-D-ribulos-1-ylimino)methylamino]-1-(5-phospho-beta-D-ribosyl)imidazole-4-carboxamide + L-glutamine = D-erythro-1-(imidazol-4-yl)glycerol 3-phosphate + 5-amino-1-(5-phospho-beta-D-ribosyl)imidazole-4-carboxamide + L-glutamate + H(+). It functions in the pathway amino-acid biosynthesis; L-histidine biosynthesis; L-histidine from 5-phospho-alpha-D-ribose 1-diphosphate: step 5/9. In terms of biological role, IGPS catalyzes the conversion of PRFAR and glutamine to IGP, AICAR and glutamate. The HisF subunit catalyzes the cyclization activity that produces IGP and AICAR from PRFAR using the ammonia provided by the HisH subunit. The protein is Imidazole glycerol phosphate synthase subunit HisF of Leptospira borgpetersenii serovar Hardjo-bovis (strain JB197).